The chain runs to 401 residues: Probable tRNA sulfurtransferase (401 aa).

Residues 60–165 (EPISEQLKGV…EQATYITFKD (106 aa)) form the THUMP domain. ATP-binding positions include 183-184 (ML), 208-209 (HF), arginine 265, glycine 287, and glutamine 296.

This sequence belongs to the ThiI family.

The protein localises to the cytoplasm. It catalyses the reaction [ThiI sulfur-carrier protein]-S-sulfanyl-L-cysteine + a uridine in tRNA + 2 reduced [2Fe-2S]-[ferredoxin] + ATP + H(+) = [ThiI sulfur-carrier protein]-L-cysteine + a 4-thiouridine in tRNA + 2 oxidized [2Fe-2S]-[ferredoxin] + AMP + diphosphate. It carries out the reaction [ThiS sulfur-carrier protein]-C-terminal Gly-Gly-AMP + S-sulfanyl-L-cysteinyl-[cysteine desulfurase] + AH2 = [ThiS sulfur-carrier protein]-C-terminal-Gly-aminoethanethioate + L-cysteinyl-[cysteine desulfurase] + A + AMP + 2 H(+). It functions in the pathway cofactor biosynthesis; thiamine diphosphate biosynthesis. Catalyzes the ATP-dependent transfer of a sulfur to tRNA to produce 4-thiouridine in position 8 of tRNAs, which functions as a near-UV photosensor. Also catalyzes the transfer of sulfur to the sulfur carrier protein ThiS, forming ThiS-thiocarboxylate. This is a step in the synthesis of thiazole, in the thiamine biosynthesis pathway. The sulfur is donated as persulfide by IscS. This Bacillus pumilus (strain SAFR-032) protein is Probable tRNA sulfurtransferase.